Reading from the N-terminus, the 70-residue chain is Large ribosomal subunit protein bL31 (70 aa).

4 residues coordinate Zn(2+): C16, C18, C37, and C40.

The protein belongs to the bacterial ribosomal protein bL31 family. Type A subfamily. In terms of assembly, part of the 50S ribosomal subunit. The cofactor is Zn(2+).

Binds the 23S rRNA. This chain is Large ribosomal subunit protein bL31, found in Desulfovibrio desulfuricans (strain ATCC 27774 / DSM 6949 / MB).